The chain runs to 415 residues: MNEVLAKGKRAKEVARELVLKSTHQKNEALAAVANQLIHETAYILEENKRDIEEGKAKGFSDSLLDRLMLTENRIIDMTEGIKQLIELRDPVGECVREWERPNGLSIQEMRVPLGVVGMIYEARPNVTVDAATICLKTGNTVILRGSSSAIHSNKAIVAVIHRALKQTSLPEESVQLIEDTTRDSAKQLFTMNDYLDVLIPRGGKQLIDTVVREASVPVLETGAGNCHIFIDETADKQMAIDIIINAKTQRPSVCNAIETIVLHEKWAQQHGSELFSSLKERGVELRGDQRALALDSSIVLASEEDWGTEFLSLTLAVKVVSSIEEAIHHINTYGSMHSEAIISENEENVSKFFVSVDAAALYHNASTRFTDGSEFGFGAEIGISTQKLHVRGPMGLPALTSTKYVIRGNGQIRK.

The protein belongs to the gamma-glutamyl phosphate reductase family.

The protein resides in the cytoplasm. It carries out the reaction L-glutamate 5-semialdehyde + phosphate + NADP(+) = L-glutamyl 5-phosphate + NADPH + H(+). The protein operates within amino-acid biosynthesis; L-proline biosynthesis; L-glutamate 5-semialdehyde from L-glutamate: step 2/2. In terms of biological role, catalyzes the NADPH-dependent reduction of L-glutamate 5-phosphate into L-glutamate 5-semialdehyde and phosphate. The product spontaneously undergoes cyclization to form 1-pyrroline-5-carboxylate. This chain is Gamma-glutamyl phosphate reductase, found in Bacillus cereus (strain ATCC 10987 / NRS 248).